The primary structure comprises 312 residues: Carbonic anhydrase 4 (312 aa).

The N-terminal stretch at 1–18 (MRMLLALLALSAARPSAS) is a signal peptide. The region spanning 21-285 (SHWCYEVQAE…LGQRTVIKSG (265 aa)) is the Alpha-carbonic anhydrase domain. Disulfide bonds link Cys-24–Cys-36 and Cys-46–Cys-229. Residue His-88 is the Proton donor/acceptor of the active site. 3 residues coordinate Zn(2+): His-115, His-117, and His-140. A substrate-binding site is contributed by 225–226 (TT). Residue Ser-284 is the site of GPI-anchor amidated serine attachment. Residues 285 to 312 (GAPGRPLPWALPALLGPMLACLLAGFLR) constitute a propeptide, removed in mature form.

Belongs to the alpha-carbonic anhydrase family. As to quaternary structure, interacts with SLC4A4. It depends on Zn(2+) as a cofactor. As to expression, expressed in the endothelium of the choriocapillaris in eyes (at protein level). Not expressed in the retinal epithelium at detectable levels.

The protein localises to the cell membrane. It carries out the reaction hydrogencarbonate + H(+) = CO2 + H2O. Activated by histamine, L-adrenaline, D-phenylalanine, L- and D-histidine. Inhibited by coumarins, saccharin, sulfonamide derivatives such as acetazolamide and Foscarnet (phosphonoformate trisodium salt). Its function is as follows. Catalyzes the reversible hydration of carbon dioxide into bicarbonate and protons and thus is essential to maintaining intracellular and extracellular pH. May stimulate the sodium/bicarbonate transporter activity of SLC4A4 that acts in pH homeostasis. It is essential for acid overload removal from the retina and retina epithelium, and acid release in the choriocapillaris in the choroid. The protein is Carbonic anhydrase 4 of Homo sapiens (Human).